Consider the following 484-residue polypeptide: Polyamine oxidase 3 (484 aa).

FAD contacts are provided by Glu-47, Arg-55, Val-236, and Glu-423. The Microbody targeting signal motif lies at Ser-482–Leu-484.

The protein belongs to the flavin monoamine oxidase family. It depends on FAD as a cofactor. In terms of tissue distribution, widely expressed.

Its subcellular location is the peroxisome. The enzyme catalyses spermine + O2 + H2O = 3-aminopropanal + spermidine + H2O2. It catalyses the reaction N(1)-acetylspermine + O2 + H2O = 3-acetamidopropanal + spermidine + H2O2. The catalysed reaction is norspermine + O2 + H2O = norspermidine + 3-aminopropanal + H2O2. It carries out the reaction spermidine + O2 + H2O = 3-aminopropanal + putrescine + H2O2. The enzyme catalyses thermospermine + O2 + H2O = 3-aminopropanal + spermidine + H2O2. It functions in the pathway amine and polyamine degradation; spermine degradation. It participates in amine and polyamine degradation; spermidine degradation. In terms of biological role, flavoenzyme involved in polyamine back-conversion. Catalyzes the oxidation of the secondary amino group of polyamines, such as spermine, spermidine and their acetyl derivatives. Substrate preference is spermidine &gt; norspermine &gt; thermospermine &gt; N(1)-acetylspermine &gt; spermine. No activity detected when putrescine is used as substrate. Plays an important role in the regulation of polyamine intracellular concentration. This chain is Polyamine oxidase 3, found in Oryza sativa subsp. japonica (Rice).